Here is a 496-residue protein sequence, read N- to C-terminus: Cytochrome P450 71D180 (496 aa).

The helical; Signal-anchor for type II membrane protein transmembrane segment at 1–21 threads the bilayer; that stretch reads MDISISWVVIIVFVLSYLILM. Cysteine 435 is a heme binding site. The tract at residues 471–496 is disordered; that stretch reads MSETPGLSGPRKNPLIMIPTIHNPTS.

It belongs to the cytochrome P450 family. Heme serves as cofactor. Mostly expressed in flowers and stems, and, to a lower extent, in leaves.

Its subcellular location is the membrane. It carries out the reaction gamma-terpinene + 2 reduced [NADPH--hemoprotein reductase] + 2 O2 = carvacrol + 2 oxidized [NADPH--hemoprotein reductase] + 3 H2O + 2 H(+). The catalysed reaction is (4S)-limonene + reduced [NADPH--hemoprotein reductase] + O2 = (1S,5R)-carveol + oxidized [NADPH--hemoprotein reductase] + H2O + H(+). It catalyses the reaction (4R)-limonene + reduced [NADPH--hemoprotein reductase] + O2 = (1R,5S)-carveol + oxidized [NADPH--hemoprotein reductase] + H2O + H(+). The protein operates within secondary metabolite biosynthesis; terpenoid biosynthesis. Functionally, involved in the biosynthesis of phenolic monoterpenes natural products thymol and carvacrol which have a broad range of biological activities acting as antimicrobial compounds, insecticides, antioxidants and pharmaceutical agents. Catalyzes the C2-hydroxylation of gamma-terpinene to produce carvacrol. Also mediates the C6-hydroxylation of (4S)-limonene and (4R)-limonene to form carveol. The protein is Cytochrome P450 71D180 of Origanum vulgare (Wild marjoram).